The chain runs to 390 residues: Centrosomal protein of 44 kDa (390 aa).

The segment at 11 to 195 is binds with microtubules and centrioles; sequence RNLEQVLRLL…ISEDTLSPIT (185 aa). A coiled-coil region spans residues 233–267; it reads EITALQTMLAECQEKLKELTLIEKRLDCLEQKMKG. A disordered region spans residues 323–347; it reads KNKVGRPASIPLSSRYSTASSDSTP. Residues Ser331 and Ser345 each carry the phosphoserine modification. Low complexity predominate over residues 335 to 345; that stretch reads SSRYSTASSDS. Thr346 is subject to Phosphothreonine. Positions 361-385 form a coiled coil; the sequence is SEETTIQKMERMKKMFEETAELLKC.

As to quaternary structure, interacts with CROCC. Interacts with POC1B; the interaction is direct and recruits POC1B to centriolar microtubules. Binds to centriolar microtubules.

It is found in the cytoplasm. Its subcellular location is the cytoskeleton. It localises to the microtubule organizing center. The protein resides in the centrosome. The protein localises to the centriole. It is found in the spindle pole. Its subcellular location is the midbody. Its function is as follows. Centriole-enriched microtubule-binding protein involved in centriole biogenesis. In collaboration with CEP295 and POC1B, is required for the centriole-to-centrosome conversion by ensuring the formation of bona fide centriole wall. Functions as a linker component that maintains centrosome cohesion. Associates with CROCC and regulates its stability and localization to the centrosome. The chain is Centrosomal protein of 44 kDa (CEP44) from Macaca fascicularis (Crab-eating macaque).